Consider the following 154-residue polypeptide: Probable deoxyuridine 5'-triphosphate nucleotidohydrolase (154 aa).

This sequence belongs to the dCTP deaminase family. Archaeal dUTPase subfamily.

The catalysed reaction is dUTP + H2O = dUMP + diphosphate + H(+). It functions in the pathway pyrimidine metabolism; dUMP biosynthesis; dUMP from dCTP (dUTP route): step 2/2. Its function is as follows. This enzyme is involved in nucleotide metabolism: it produces dUMP, the immediate precursor of thymidine nucleotides and it decreases the intracellular concentration of dUTP so that uracil cannot be incorporated into DNA. This chain is Probable deoxyuridine 5'-triphosphate nucleotidohydrolase, found in Methanopyrus kandleri (strain AV19 / DSM 6324 / JCM 9639 / NBRC 100938).